The chain runs to 73 residues: UPF0499 protein CHGG_06021 (73 aa).

The first 20 residues, 1-20 (MKSSIHVVLFFLLSLVASMA), serve as a signal peptide directing secretion. 3 cysteine pairs are disulfide-bonded: Cys-41–Cys-55, Cys-48–Cys-60, and Cys-54–Cys-69.

Belongs to the UPF0499 family.

It localises to the secreted. The protein is UPF0499 protein CHGG_06021 of Chaetomium globosum (strain ATCC 6205 / CBS 148.51 / DSM 1962 / NBRC 6347 / NRRL 1970) (Soil fungus).